The sequence spans 117 residues: Alpha-endosulfine (117 aa).

The interval 1–53 (MAAPLGTGARAEDSGQEKQDSQEKETVIPERAEEAKLKAKYPNLGQKPGGSDF) is disordered. The segment covering 10 to 37 (RAEDSGQEKQDSQEKETVIPERAEEAKL) has biased composition (basic and acidic residues). S67 carries the phosphoserine; by GWL modification. The segment at 76–117 (KMKNKQLPTAGPDKNLVTGDHIPKPQDLPQRKSSLVASKLAG) is disordered.

It belongs to the endosulfine family. Post-translationally, phosphorylation at Ser-67 by GWL during mitosis is essential for interaction with PPP2R2D (PR55-delta) and subsequent inactivation of PP2A.

The protein resides in the cytoplasm. In terms of biological role, protein phosphatase inhibitor that specifically inhibits protein phosphatase 2A (PP2A) during mitosis. When phosphorylated at Ser-67 during mitosis, specifically interacts with PPP2R2D (PR55-delta) and inhibits its activity, leading to inactivation of PP2A, an essential condition to keep cyclin-B1-CDK1 activity high during M phase. This Gallus gallus (Chicken) protein is Alpha-endosulfine (ENSA).